The chain runs to 389 residues: Chalcone synthase 3 (389 aa).

Residue Cys164 is part of the active site.

Belongs to the thiolase-like superfamily. Chalcone/stilbene synthases family.

It carries out the reaction (E)-4-coumaroyl-CoA + 3 malonyl-CoA + 3 H(+) = 2',4,4',6'-tetrahydroxychalcone + 3 CO2 + 4 CoA. The protein operates within secondary metabolite biosynthesis; flavonoid biosynthesis. Its function is as follows. The primary product of this enzyme is 4,2',4',6'-tetrahydroxychalcone (also termed naringenin-chalcone or chalcone) which can under specific conditions spontaneously isomerize into naringenin. This chain is Chalcone synthase 3 (CHS3), found in Camellia sinensis (Tea plant).